We begin with the raw amino-acid sequence, 745 residues long: Phosphoribosylformylglycinamidine synthase subunit PurL (745 aa).

The active site involves His-54. Tyr-57 and Lys-96 together coordinate ATP. A Mg(2+)-binding site is contributed by Glu-98. Residues 99–102 and Arg-121 each bind substrate; that span reads SHNH. Residue His-100 is the Proton acceptor of the active site. Asp-122 contributes to the Mg(2+) binding site. Residue Gln-250 coordinates substrate. Asp-278 is a binding site for Mg(2+). 322–324 lines the substrate pocket; it reads ESQ. Residues Asp-503 and Gly-540 each coordinate ATP. Asn-541 contributes to the Mg(2+) binding site. Residue Ser-543 coordinates substrate.

The protein belongs to the FGAMS family. Monomer. Part of the FGAM synthase complex composed of 1 PurL, 1 PurQ and 2 PurS subunits.

It localises to the cytoplasm. The catalysed reaction is N(2)-formyl-N(1)-(5-phospho-beta-D-ribosyl)glycinamide + L-glutamine + ATP + H2O = 2-formamido-N(1)-(5-O-phospho-beta-D-ribosyl)acetamidine + L-glutamate + ADP + phosphate + H(+). The protein operates within purine metabolism; IMP biosynthesis via de novo pathway; 5-amino-1-(5-phospho-D-ribosyl)imidazole from N(2)-formyl-N(1)-(5-phospho-D-ribosyl)glycinamide: step 1/2. In terms of biological role, part of the phosphoribosylformylglycinamidine synthase complex involved in the purines biosynthetic pathway. Catalyzes the ATP-dependent conversion of formylglycinamide ribonucleotide (FGAR) and glutamine to yield formylglycinamidine ribonucleotide (FGAM) and glutamate. The FGAM synthase complex is composed of three subunits. PurQ produces an ammonia molecule by converting glutamine to glutamate. PurL transfers the ammonia molecule to FGAR to form FGAM in an ATP-dependent manner. PurS interacts with PurQ and PurL and is thought to assist in the transfer of the ammonia molecule from PurQ to PurL. The sequence is that of Phosphoribosylformylglycinamidine synthase subunit PurL from Helicobacter hepaticus (strain ATCC 51449 / 3B1).